The sequence spans 255 residues: Octanoyltransferase (255 aa).

Residues 1–27 are disordered; sequence MPPASDAHAAPDAAASTSASPQSCAAP. One can recognise a BPL/LPL catalytic domain in the interval 59–240; that stretch reads PDTGDEIWVV…RLIANLDGAT (182 aa). Residues 99–106, 171–173, and 184–186 contribute to the substrate site; these read RGGQITYH, ALG, and GLS. Cys202 functions as the Acyl-thioester intermediate in the catalytic mechanism.

It belongs to the LipB family.

It localises to the cytoplasm. It catalyses the reaction octanoyl-[ACP] + L-lysyl-[protein] = N(6)-octanoyl-L-lysyl-[protein] + holo-[ACP] + H(+). It functions in the pathway protein modification; protein lipoylation via endogenous pathway; protein N(6)-(lipoyl)lysine from octanoyl-[acyl-carrier-protein]: step 1/2. Its function is as follows. Catalyzes the transfer of endogenously produced octanoic acid from octanoyl-acyl-carrier-protein onto the lipoyl domains of lipoate-dependent enzymes. Lipoyl-ACP can also act as a substrate although octanoyl-ACP is likely to be the physiological substrate. This chain is Octanoyltransferase, found in Burkholderia thailandensis (strain ATCC 700388 / DSM 13276 / CCUG 48851 / CIP 106301 / E264).